Reading from the N-terminus, the 419-residue chain is UDP-N-acetylglucosamine 1-carboxyvinyltransferase (419 aa).

22–23 (KN) lines the phosphoenolpyruvate pocket. Residue R93 coordinates UDP-N-acetyl-alpha-D-glucosamine. The active-site Proton donor is C117. C117 carries the 2-(S-cysteinyl)pyruvic acid O-phosphothioketal modification. UDP-N-acetyl-alpha-D-glucosamine-binding residues include D307 and I329.

Belongs to the EPSP synthase family. MurA subfamily.

Its subcellular location is the cytoplasm. It catalyses the reaction phosphoenolpyruvate + UDP-N-acetyl-alpha-D-glucosamine = UDP-N-acetyl-3-O-(1-carboxyvinyl)-alpha-D-glucosamine + phosphate. It participates in cell wall biogenesis; peptidoglycan biosynthesis. In terms of biological role, cell wall formation. Adds enolpyruvyl to UDP-N-acetylglucosamine. This is UDP-N-acetylglucosamine 1-carboxyvinyltransferase from Shewanella baltica (strain OS195).